Reading from the N-terminus, the 489-residue chain is Endoglucanase 4 (489 aa).

Positions 1 to 25 (MAGKSFMTPAIMLAMLLLISPETYA) are cleaved as a signal peptide. The active-site Nucleophile is Asp81. Residue His409 is part of the active site. The N-linked (GlcNAc...) asparagine glycan is linked to Asn453. Catalysis depends on residues Asp460 and Glu469.

This sequence belongs to the glycosyl hydrolase 9 (cellulase E) family.

The protein localises to the secreted. It carries out the reaction Endohydrolysis of (1-&gt;4)-beta-D-glucosidic linkages in cellulose, lichenin and cereal beta-D-glucans.. This is Endoglucanase 4 from Arabidopsis thaliana (Mouse-ear cress).